A 458-amino-acid polypeptide reads, in one-letter code: Argininosuccinate lyase (458 aa).

It belongs to the lyase 1 family. Argininosuccinate lyase subfamily.

Its subcellular location is the cytoplasm. It catalyses the reaction 2-(N(omega)-L-arginino)succinate = fumarate + L-arginine. It functions in the pathway amino-acid biosynthesis; L-arginine biosynthesis; L-arginine from L-ornithine and carbamoyl phosphate: step 3/3. The sequence is that of Argininosuccinate lyase from Citrifermentans bemidjiense (strain ATCC BAA-1014 / DSM 16622 / JCM 12645 / Bem) (Geobacter bemidjiensis).